The sequence spans 193 residues: Superoxide dismutase [Fe] (193 aa).

Positions 27, 74, 157, and 161 each coordinate Fe cation.

Belongs to the iron/manganese superoxide dismutase family. Homodimer. Fe cation is required as a cofactor.

It carries out the reaction 2 superoxide + 2 H(+) = H2O2 + O2. Destroys superoxide anion radicals which are normally produced within the cells and which are toxic to biological systems. The protein is Superoxide dismutase [Fe] (sodB) of Salmonella typhimurium (strain LT2 / SGSC1412 / ATCC 700720).